A 1147-amino-acid polypeptide reads, in one-letter code: SR-related and CTD-associated factor 4 (1147 aa).

A CID domain is found at 1-139 (MDAVNAFNQE…PLLDMAAGTS (139 aa)). At Lys49 the chain carries N6-acetyllysine. Disordered regions lie at residues 145-179 (AENV…AVPQ), 235-254 (KTTP…PEQK), 269-331 (DEPE…QQPA), and 424-502 (VKRH…KPET). Position 154 is a phosphoserine (Ser154). Composition is skewed to low complexity over residues 283–292 (TAVTTTAPAA) and 299–310 (TATVPAAAAPAA). Positions 424–433 (VKRHMSDNRK) are enriched in basic and acidic residues. The span at 434–475 (SRSRSASRSPKRRRSRSGSRSRRSRHRRSRSRSRDRRRHSPR) shows a compositional bias: basic residues. Residues 477 to 492 (RSQERRDREKERERRQ) are compositionally biased toward basic and acidic residues. The RRM domain maps to 508-582 (TTLWVGQLDK…KSIKIAWALN (75 aa)). 2 disordered regions span residues 629-661 (DWKG…IPKP) and 879-1147 (RPMP…EAPR). Phosphoserine is present on Ser656. Positions 879–913 (RPMPPHMMHRGPPPGPGGFAMPPPHGMKGPFPPHG) are enriched in pro residues. Low complexity predominate over residues 941-965 (QQPPQQPQQQPQPQAPQQPQQQQQQ). Residues 966–977 (QPPPSQQPPPTQ) show a composition bias toward pro residues. Residue Ser1004 is modified to Phosphoserine. Positions 1009–1085 (VENDRERYGN…RGKEKPEVTD (77 aa)) are enriched in basic and acidic residues.

In terms of assembly, interacts with POLR2A; via C-terminal heptapeptide repeat domain (CTD) phosphorylated at 'Ser-2' and 'Ser-5'.

Its subcellular location is the nucleus. In terms of biological role, anti-terminator protein required to prevent early mRNA termination during transcription. Together with SCAF8, acts by suppressing the use of early, alternative poly(A) sites, thereby preventing the accumulation of non-functional truncated proteins. Mechanistically, associates with the phosphorylated C-terminal heptapeptide repeat domain (CTD) of the largest RNA polymerase II subunit (POLR2A), and subsequently binds nascent RNA upstream of early polyadenylation sites to prevent premature mRNA transcript cleavage and polyadenylation. Independently of SCAF8, also acts as a suppressor of transcriptional readthrough. This chain is SR-related and CTD-associated factor 4, found in Homo sapiens (Human).